Reading from the N-terminus, the 122-residue chain is Basic phospholipase A2 PL-X (122 aa).

7 disulfide bridges follow: cysteine 26/cysteine 115, cysteine 28/cysteine 44, cysteine 43/cysteine 95, cysteine 49/cysteine 122, cysteine 50/cysteine 88, cysteine 57/cysteine 81, and cysteine 75/cysteine 86. Ca(2+) contacts are provided by tyrosine 27, glycine 29, and glycine 31. Residue histidine 47 is part of the active site. Position 48 (aspartate 48) interacts with Ca(2+). Residue aspartate 89 is part of the active site.

Belongs to the phospholipase A2 family. Group II subfamily. D49 sub-subfamily. Ca(2+) is required as a cofactor. In terms of tissue distribution, expressed by the venom gland.

The protein localises to the secreted. It catalyses the reaction a 1,2-diacyl-sn-glycero-3-phosphocholine + H2O = a 1-acyl-sn-glycero-3-phosphocholine + a fatty acid + H(+). PLA2 catalyzes the calcium-dependent hydrolysis of the 2-acyl groups in 3-sn-phosphoglycerides. The sequence is that of Basic phospholipase A2 PL-X from Protobothrops flavoviridis (Habu).